The primary structure comprises 460 residues: Probable glucan endo-1,3-beta-glucosidase eglC (460 aa).

The first 18 residues, 1–18, serve as a signal peptide directing secretion; that stretch reads MQLAQLAAFAMTLATSEA. E128 acts as the Proton donor in catalysis. The N-linked (GlcNAc...) asparagine glycan is linked to N183. Catalysis depends on E239, which acts as the Nucleophile. 3 N-linked (GlcNAc...) asparagine glycosylation sites follow: N312, N367, and N373. Residues 379 to 437 form a disordered region; that stretch reads RPSGSASARPSAGAISSGSGSSSSGSGSSGSTGTSATSGQSSSSGSSAAAGSSSPAAFS. The segment covering 380-437 has biased composition (low complexity); sequence PSGSASARPSAGAISSGSGSSSSGSGSSGSTGTSATSGQSSSSGSSAAAGSSSPAAFS. A lipid anchor (GPI-anchor amidated serine) is attached at S430. Positions 431 to 460 are cleaved as a propeptide — removed in mature form; sequence SSPAAFSGASTLSGSLFGAVVAVFMTLAAL.

It belongs to the glycosyl hydrolase 17 family. In terms of processing, the GPI-anchor is attached to the protein in the endoplasmic reticulum and serves to target the protein to the cell surface. There, the glucosamine-inositol phospholipid moiety is cleaved off and the GPI-modified mannoprotein is covalently attached via its lipidless GPI glycan remnant to the 1,6-beta-glucan of the outer cell wall layer.

Its subcellular location is the cell membrane. The protein resides in the secreted. It localises to the cell wall. It catalyses the reaction Hydrolysis of (1-&gt;3)-beta-D-glucosidic linkages in (1-&gt;3)-beta-D-glucans.. In terms of biological role, glucanases play a role in cell expansion during growth, in cell-cell fusion during mating, and in spore release during sporulation. This enzyme may be involved in beta-glucan degradation and also function biosynthetically as a transglycosylase. The polypeptide is Probable glucan endo-1,3-beta-glucosidase eglC (eglC) (Aspergillus niger (strain ATCC MYA-4892 / CBS 513.88 / FGSC A1513)).